The primary structure comprises 310 residues: MESTQQMVSSIINTSFEAAVVAATSTLELMGIQYDYNEVFTRVKSKFDYVMDDSGVKNNLLGKAITIDQALNGKFGSAIRNRNWMTDSKTVAKLDEDVNKLRMTLSSKGIDQKMRVLNACFSVKRIPGKSSSIIKCTRLMKDKIERGEVEVDDSYVDEKMEIDTIDWKSRYDQLEKRFESLKQRVSEKYNTWVQKAKKVNENMYSLQNVISQQQNQIADLQQYCNKLEADLQGKFSSLVSSVEWYLRSMELSDDVKNDIEQQLNSIDLINPINAIDDIESLIRNLIQDYDRTFLMLKGLLKQCNYEYAYE.

An RNA-binding region spans residues 1–146; sequence MESTQQMVSS…TRLMKDKIER (146 aa). Residues 147–203 are dimerization; it reads GEVEVDDSYVDEKMEIDTIDWKSRYDQLEKRFESLKQRVSEKYNTWVQKAKKVNENM. A coiled-coil region spans residues 163–234; the sequence is DTIDWKSRYD…NKLEADLQGK (72 aa). Residues 167–231 are interaction with host ZC3H7B; it reads WKSRYDQLEK…QYCNKLEADL (65 aa). The interval 205 to 310 is interaction with host EIF4G1; the sequence is SLQNVISQQQ…KQCNYEYAYE (106 aa).

It belongs to the rotavirus NSP3 family. Homodimer. Interacts (via the coiled-coil region) with host ZC3H7B (via LD motif). Interacts with host EIF4G1.

It localises to the host cytoplasm. In terms of biological role, plays an important role in stimulating the translation of viral mRNAs. These mRNAs are capped but not polyadenylated, instead terminating in a conserved sequence 'GACC' at the 3' that is recognized by NSP3, which competes with host PABPC1 for EIF4G1 binding. The interaction between NSP3 and host EIF4G1 stabilizes the EIF4E-EIF4G1 interaction, thereby facilitating the initiation of capped mRNA translation. This is Non-structural protein 3 from Homo sapiens (Human).